A 284-amino-acid chain; its full sequence is ATP phosphoribosyltransferase (284 aa).

The protein belongs to the ATP phosphoribosyltransferase family. Long subfamily. Mg(2+) is required as a cofactor.

Its subcellular location is the cytoplasm. The enzyme catalyses 1-(5-phospho-beta-D-ribosyl)-ATP + diphosphate = 5-phospho-alpha-D-ribose 1-diphosphate + ATP. Its pathway is amino-acid biosynthesis; L-histidine biosynthesis; L-histidine from 5-phospho-alpha-D-ribose 1-diphosphate: step 1/9. Feedback inhibited by histidine. Catalyzes the condensation of ATP and 5-phosphoribose 1-diphosphate to form N'-(5'-phosphoribosyl)-ATP (PR-ATP). Has a crucial role in the pathway because the rate of histidine biosynthesis seems to be controlled primarily by regulation of HisG enzymatic activity. The protein is ATP phosphoribosyltransferase of Pseudarthrobacter chlorophenolicus (strain ATCC 700700 / DSM 12829 / CIP 107037 / JCM 12360 / KCTC 9906 / NCIMB 13794 / A6) (Arthrobacter chlorophenolicus).